The sequence spans 68 residues: Large ribosomal subunit protein bL32 (68 aa).

The segment at 1-24 is disordered; it reads MAVPQNRVTRSRRNMRRSHDALVA.

It belongs to the bacterial ribosomal protein bL32 family.

This Paracoccus denitrificans (strain Pd 1222) protein is Large ribosomal subunit protein bL32.